Consider the following 355-residue polypeptide: S-adenosylmethionine:tRNA ribosyltransferase-isomerase (355 aa).

It belongs to the QueA family. Monomer.

The protein resides in the cytoplasm. The enzyme catalyses 7-aminomethyl-7-carbaguanosine(34) in tRNA + S-adenosyl-L-methionine = epoxyqueuosine(34) in tRNA + adenine + L-methionine + 2 H(+). It participates in tRNA modification; tRNA-queuosine biosynthesis. In terms of biological role, transfers and isomerizes the ribose moiety from AdoMet to the 7-aminomethyl group of 7-deazaguanine (preQ1-tRNA) to give epoxyqueuosine (oQ-tRNA). This is S-adenosylmethionine:tRNA ribosyltransferase-isomerase from Aeromonas hydrophila subsp. hydrophila (strain ATCC 7966 / DSM 30187 / BCRC 13018 / CCUG 14551 / JCM 1027 / KCTC 2358 / NCIMB 9240 / NCTC 8049).